We begin with the raw amino-acid sequence, 391 residues long: Casein kinase II subunit alpha (391 aa).

The interval 36 to 41 (QDDYQL) is interaction with beta subunit. The region spanning 39–324 (YQLVRKLGRG…AREAMEHPYF (286 aa)) is the Protein kinase domain. Residues 45 to 53 (LGRGKYSEV) and Lys68 contribute to the ATP site. The Proton acceptor role is filled by Asp156. Over residues 335–346 (GSSNMPGGSTPV) the composition is skewed to polar residues. A disordered region spans residues 335–363 (GSSNMPGGSTPVSSASMMSGISSVPTPSP). Over residues 347-357 (SSASMMSGISS) the composition is skewed to low complexity.

It belongs to the protein kinase superfamily. Ser/Thr protein kinase family. CK2 subfamily. As to quaternary structure, tetramer composed of an alpha chain, an alpha' and two beta chains. Interacts with RNPS1.

The protein localises to the nucleus. It carries out the reaction L-seryl-[protein] + ATP = O-phospho-L-seryl-[protein] + ADP + H(+). The enzyme catalyses L-threonyl-[protein] + ATP = O-phospho-L-threonyl-[protein] + ADP + H(+). Functionally, catalytic subunit of a constitutively active serine/threonine-protein kinase complex that phosphorylates a large number of substrates containing acidic residues C-terminal to the phosphorylated serine or threonine. Regulates numerous cellular processes, such as cell cycle progression, apoptosis and transcription, as well as viral infection. May act as a regulatory node which integrates and coordinates numerous signals leading to an appropriate cellular response. During mitosis, functions as a component of the p53/TP53-dependent spindle assembly checkpoint (SAC) that maintains cyclin-B-CDK1 activity and G2 arrest in response to spindle damage. Can also negatively regulate apoptosis. Phosphorylates the caspases CASP9 and CASP2 and the apoptotic regulator NOL3. Phosphorylation protects CASP9 from cleavage and activation by CASP8, and inhibits the dimerization of CASP2 and activation of CASP8. Plays an important role in the circadian clock function by phosphorylating BMAL1. In Gallus gallus (Chicken), this protein is Casein kinase II subunit alpha (CSNK2A1).